A 263-amino-acid chain; its full sequence is Undecaprenyl-diphosphatase 2 (263 aa).

Helical transmembrane passes span 15 to 37, 42 to 62, 79 to 99, 107 to 127, 142 to 162, 183 to 203, 216 to 236, and 242 to 262; these read GLTEFLPVSSTGHMILTGHLIGF, AKVFEVVIQLGSILAVVVIFW, SLNLLHIIIGMIPAGVLGVLF, LFGPGPVVISLVAGGILMIVA, ITYKQAFTIGMFQCLALWPGF, AEYTFILAVPMMVAASGLDLI, LFVTGFVTAFVVAMLAIVSFL, and VKLTPFAYYRFILAAVFYFFI.

Belongs to the UppP family.

It localises to the cell membrane. The catalysed reaction is di-trans,octa-cis-undecaprenyl diphosphate + H2O = di-trans,octa-cis-undecaprenyl phosphate + phosphate + H(+). Its function is as follows. Catalyzes the dephosphorylation of undecaprenyl diphosphate (UPP). Confers resistance to bacitracin. The sequence is that of Undecaprenyl-diphosphatase 2 from Bacillus cereus (strain ATCC 14579 / DSM 31 / CCUG 7414 / JCM 2152 / NBRC 15305 / NCIMB 9373 / NCTC 2599 / NRRL B-3711).